Reading from the N-terminus, the 79-residue chain is Sec-independent protein translocase protein TatA (79 aa).

A helical membrane pass occupies residues 1–21 (MGGWSSPSHWLIILLIVVLLF). The span at 52–61 (KNTQKIEENK) shows a compositional bias: basic and acidic residues. Positions 52 to 79 (KNTQKIEENKNTTNNTSADASIDKTKKA) are disordered.

This sequence belongs to the TatA/E family. In terms of assembly, the Tat system comprises two distinct complexes: a TatABC complex, containing multiple copies of TatA, TatB and TatC subunits, and a separate TatA complex, containing only TatA subunits. Substrates initially bind to the TatABC complex, which probably triggers association of the separate TatA complex to form the active translocon.

The protein localises to the cell inner membrane. In terms of biological role, part of the twin-arginine translocation (Tat) system that transports large folded proteins containing a characteristic twin-arginine motif in their signal peptide across membranes. TatA could form the protein-conducting channel of the Tat system. The protein is Sec-independent protein translocase protein TatA of Campylobacter jejuni subsp. jejuni serotype O:6 (strain 81116 / NCTC 11828).